The sequence spans 117 residues: Urease subunit beta (117 aa).

A disordered region spans residues 95–117 (NAVNGKLDGGPHPGVPATERGAK).

Belongs to the urease beta subunit family. Heterotrimer of UreA (gamma), UreB (beta) and UreC (alpha) subunits. Three heterotrimers associate to form the active enzyme.

It is found in the cytoplasm. It carries out the reaction urea + 2 H2O + H(+) = hydrogencarbonate + 2 NH4(+). It participates in nitrogen metabolism; urea degradation; CO(2) and NH(3) from urea (urease route): step 1/1. This Pseudarthrobacter chlorophenolicus (strain ATCC 700700 / DSM 12829 / CIP 107037 / JCM 12360 / KCTC 9906 / NCIMB 13794 / A6) (Arthrobacter chlorophenolicus) protein is Urease subunit beta.